A 714-amino-acid chain; its full sequence is DNA ligase (714 aa).

NAD(+) is bound by residues 40 to 44, 90 to 91, and glutamate 124; these read DADYD and SL. Lysine 126 (N6-AMP-lysine intermediate) is an active-site residue. NAD(+) contacts are provided by arginine 147, glutamate 183, lysine 304, and lysine 328. The Zn(2+) site is built by cysteine 420, cysteine 423, cysteine 438, and cysteine 444. The 81-residue stretch at 634 to 714 folds into the BRCT domain; sequence TRDSEVSGKT…EWAAIVAAAG (81 aa).

Belongs to the NAD-dependent DNA ligase family. LigA subfamily. The cofactor is Mg(2+). Mn(2+) serves as cofactor.

It catalyses the reaction NAD(+) + (deoxyribonucleotide)n-3'-hydroxyl + 5'-phospho-(deoxyribonucleotide)m = (deoxyribonucleotide)n+m + AMP + beta-nicotinamide D-nucleotide.. In terms of biological role, DNA ligase that catalyzes the formation of phosphodiester linkages between 5'-phosphoryl and 3'-hydroxyl groups in double-stranded DNA using NAD as a coenzyme and as the energy source for the reaction. It is essential for DNA replication and repair of damaged DNA. The polypeptide is DNA ligase (Sphingopyxis alaskensis (strain DSM 13593 / LMG 18877 / RB2256) (Sphingomonas alaskensis)).